We begin with the raw amino-acid sequence, 497 residues long: MKYIVALDQGTTSSRAILFDESQNIIGVAQKEFTQIYPNEGWVEHDPMEIWSSQSGVLSEVIARAGISQHDIIALGITNQRETTIVWDKNTGKPVYNAIVWQCRRTAKICDELKEIEGFSDYVKDNTGLLVDAYFSGTKIKWILDNVEGARERAEKGELLFGTVDTWLIWKLTNGKIHATDYTNASRTMLYNIKELKWDEKILETLNIPKSMLPEVKDSSGTFGYANLGGKGGHRIPIAGVAGDQQSALFGQACFEEGESKNTYGTGCFLLMNTGEKFVKSNNGLITTIAIGLNGKVQYALEGSVFVGGASVQWLRDELKLISDSKDTEYFARKVKDSAGVYVVPAFVGLGAPYWDMYARGAILGLTRGANKNHIIRATLESIAYQTKDVLKAMEEDSGIKLNGLKVDGGAAANNFLMEFQADILGESVKRPTVLETTALGAAYLAGLAVGFWENKNEIKQKWVLDKEFTPNMPKEERDKKYAGWLKAVERTKKWEE.

Threonine 11 is a binding site for ADP. ATP is bound by residues threonine 11, threonine 12, and serine 13. Threonine 11 lines the sn-glycerol 3-phosphate pocket. Position 15 (arginine 15) interacts with ADP. 4 residues coordinate sn-glycerol 3-phosphate: arginine 81, glutamate 82, tyrosine 134, and aspartate 244. 5 residues coordinate glycerol: arginine 81, glutamate 82, tyrosine 134, aspartate 244, and glutamine 245. 2 residues coordinate ADP: threonine 266 and glycine 309. ATP contacts are provided by threonine 266, glycine 309, glutamine 313, and glycine 410. 2 residues coordinate ADP: glycine 410 and asparagine 414.

The protein belongs to the FGGY kinase family.

It carries out the reaction glycerol + ATP = sn-glycerol 3-phosphate + ADP + H(+). It functions in the pathway polyol metabolism; glycerol degradation via glycerol kinase pathway; sn-glycerol 3-phosphate from glycerol: step 1/1. Inhibited by fructose 1,6-bisphosphate (FBP). Key enzyme in the regulation of glycerol uptake and metabolism. Catalyzes the phosphorylation of glycerol to yield sn-glycerol 3-phosphate. This chain is Glycerol kinase, found in Fusobacterium nucleatum subsp. nucleatum (strain ATCC 25586 / DSM 15643 / BCRC 10681 / CIP 101130 / JCM 8532 / KCTC 2640 / LMG 13131 / VPI 4355).